Reading from the N-terminus, the 380-residue chain is uncharacterized protein (380 aa).

The stretch at Asp-256–Pro-301 forms a coiled coil.

This is an uncharacterized protein from Pasteurella multocida (strain Pm70).